The sequence spans 463 residues: Glutamate--tRNA ligase (463 aa).

The 'HIGH' region motif lies at 10–20 (PSPTGHLHIGG). Residues 236 to 240 (KLSKR) carry the 'KMSKS' region motif. Lys-239 serves as a coordination point for ATP.

Belongs to the class-I aminoacyl-tRNA synthetase family. Glutamate--tRNA ligase type 1 subfamily. As to quaternary structure, monomer.

It is found in the cytoplasm. The catalysed reaction is tRNA(Glu) + L-glutamate + ATP = L-glutamyl-tRNA(Glu) + AMP + diphosphate. In terms of biological role, catalyzes the attachment of glutamate to tRNA(Glu) in a two-step reaction: glutamate is first activated by ATP to form Glu-AMP and then transferred to the acceptor end of tRNA(Glu). This is Glutamate--tRNA ligase from Nitratidesulfovibrio vulgaris (strain DP4) (Desulfovibrio vulgaris).